The primary structure comprises 335 residues: Protein STRICTOSIDINE SYNTHASE-LIKE 12 (335 aa).

The first 22 residues, 1–22 (MTSFCSMISLLLLLSLSSAVFS), serve as a signal peptide directing secretion. Asparagine 80 carries N-linked (GlcNAc...) asparagine glycosylation.

The protein belongs to the strictosidine synthase family.

Its subcellular location is the vacuole. The catalysed reaction is 3alpha(S)-strictosidine + H2O = secologanin + tryptamine. It participates in alkaloid biosynthesis; 3alpha(S)-strictosidine biosynthesis; 3alpha(S)-strictosidine from secologanin and tryptamine: step 1/1. Catalyzes the stereospecific condensation of tryptamine with secologanin to form strictosidine, the key intermediate of indole alkaloid biosynthesis. The chain is Protein STRICTOSIDINE SYNTHASE-LIKE 12 from Arabidopsis thaliana (Mouse-ear cress).